The primary structure comprises 284 residues: Diaminopimelate epimerase (284 aa).

2 residues coordinate substrate: N14 and N67. Residue C76 is the Proton donor of the active site. Substrate contacts are provided by residues 77 to 78, N166, N199, and 217 to 218; these read GN and ER. The active-site Proton acceptor is the C226. Residue 227–228 coordinates substrate; the sequence is GT.

It belongs to the diaminopimelate epimerase family. As to quaternary structure, homodimer.

It localises to the cytoplasm. It carries out the reaction (2S,6S)-2,6-diaminopimelate = meso-2,6-diaminopimelate. It functions in the pathway amino-acid biosynthesis; L-lysine biosynthesis via DAP pathway; DL-2,6-diaminopimelate from LL-2,6-diaminopimelate: step 1/1. Its function is as follows. Catalyzes the stereoinversion of LL-2,6-diaminopimelate (L,L-DAP) to meso-diaminopimelate (meso-DAP), a precursor of L-lysine and an essential component of the bacterial peptidoglycan. This chain is Diaminopimelate epimerase, found in Geobacillus sp. (strain WCH70).